A 346-amino-acid chain; its full sequence is Senescence-specific cysteine protease SAG12 (346 aa).

A signal peptide spans 1–25 (MALKHMQIFLFVAIFSSFCFSITLS). Asparagine 124 is a glycosylation site (N-linked (GlcNAc...) asparagine). 3 disulfide bridges follow: cysteine 151/cysteine 192, cysteine 185/cysteine 225, and cysteine 283/cysteine 335. Residue cysteine 154 is part of the active site. Histidine 289 is an active-site residue. Asparagine 301 carries an N-linked (GlcNAc...) asparagine glycan. Residue asparagine 310 is part of the active site.

The protein belongs to the peptidase C1 family. In terms of tissue distribution, found in senescent leaves, especially in senescence-associated vacuoles- (SAVs) containing cells (e.g. mesophyll and guard cells), and in senescencing ovules of unfertilised pistils.

The protein resides in the vacuole. Cysteine protease that may have a developmental senescence specific cell death function during apoptosis, heavy metal detoxification, and hypersensitive response. In Arabidopsis thaliana (Mouse-ear cress), this protein is Senescence-specific cysteine protease SAG12.